The chain runs to 51 residues: Large ribosomal subunit protein bL33 (51 aa).

Belongs to the bacterial ribosomal protein bL33 family.

This is Large ribosomal subunit protein bL33 from Vesicomyosocius okutanii subsp. Calyptogena okutanii (strain HA).